A 679-amino-acid polypeptide reads, in one-letter code: Methionine--tRNA ligase (679 aa).

Zn(2+) is bound by residues cysteine 147, cysteine 150, cysteine 160, and cysteine 163. The 'KMSKS' region motif lies at 332–336 (KISTS). Residue threonine 335 coordinates ATP. Residues 578-679 (DFMKLDIRVG…REVKPGSEVK (102 aa)) form the tRNA-binding domain.

It belongs to the class-I aminoacyl-tRNA synthetase family. MetG type 1 subfamily. In terms of assembly, homodimer. Zn(2+) is required as a cofactor.

The protein localises to the cytoplasm. The catalysed reaction is tRNA(Met) + L-methionine + ATP = L-methionyl-tRNA(Met) + AMP + diphosphate. Its function is as follows. Is required not only for elongation of protein synthesis but also for the initiation of all mRNA translation through initiator tRNA(fMet) aminoacylation. This chain is Methionine--tRNA ligase, found in Bacteroides fragilis (strain YCH46).